A 189-amino-acid chain; its full sequence is uncharacterized protein (189 aa).

Positions 1–20 are cleaved as a signal peptide; it reads MKFSTVGFLFSTILFKSAFA. The 36-residue stretch at 74–109 folds into the EF-hand domain; it reads KKNEVLVDVLKKCDPSGNRRITLDEFLAFRKNGGEL. Asp87, Ser89, Asn91, Arg93, and Glu98 together coordinate Ca(2+).

It is found in the endoplasmic reticulum lumen. Its subcellular location is the golgi apparatus lumen. This is an uncharacterized protein from Schizosaccharomyces pombe (strain 972 / ATCC 24843) (Fission yeast).